A 314-amino-acid polypeptide reads, in one-letter code: Methionyl-tRNA formyltransferase (314 aa).

(6S)-5,6,7,8-tetrahydrofolate is bound at residue 111 to 114; it reads SLLP.

It belongs to the Fmt family.

The enzyme catalyses L-methionyl-tRNA(fMet) + (6R)-10-formyltetrahydrofolate = N-formyl-L-methionyl-tRNA(fMet) + (6S)-5,6,7,8-tetrahydrofolate + H(+). Functionally, attaches a formyl group to the free amino group of methionyl-tRNA(fMet). The formyl group appears to play a dual role in the initiator identity of N-formylmethionyl-tRNA by promoting its recognition by IF2 and preventing the misappropriation of this tRNA by the elongation apparatus. This is Methionyl-tRNA formyltransferase from Chlorobium chlorochromatii (strain CaD3).